Reading from the N-terminus, the 169-residue chain is Macro domain-containing protein SCO6450 (169 aa).

Residues 1 to 169 form the Macro domain; sequence MTGITLVQGD…AYEAFAARLG (169 aa).

Belongs to the MacroD-type family.

The chain is Macro domain-containing protein SCO6450 from Streptomyces coelicolor (strain ATCC BAA-471 / A3(2) / M145).